Reading from the N-terminus, the 458-residue chain is tRNA modification GTPase MnmE (458 aa).

Residues Arg26, Glu88, and Arg127 each contribute to the (6S)-5-formyl-5,6,7,8-tetrahydrofolate site. The 155-residue stretch at Gly224–Phe378 folds into the TrmE-type G domain. K(+) is bound at residue Asn234. GTP contacts are provided by residues Asn234–Ser239, Thr253–Thr259, and Asp278–Gly281. Ser238 contacts Mg(2+). K(+)-binding residues include Thr253, Ile255, and Thr258. Thr259 provides a ligand contact to Mg(2+). Lys458 is a (6S)-5-formyl-5,6,7,8-tetrahydrofolate binding site.

It belongs to the TRAFAC class TrmE-Era-EngA-EngB-Septin-like GTPase superfamily. TrmE GTPase family. In terms of assembly, homodimer. Heterotetramer of two MnmE and two MnmG subunits. The cofactor is K(+).

The protein localises to the cytoplasm. Functionally, exhibits a very high intrinsic GTPase hydrolysis rate. Involved in the addition of a carboxymethylaminomethyl (cmnm) group at the wobble position (U34) of certain tRNAs, forming tRNA-cmnm(5)s(2)U34. This Streptococcus pyogenes serotype M6 (strain ATCC BAA-946 / MGAS10394) protein is tRNA modification GTPase MnmE.